A 396-amino-acid polypeptide reads, in one-letter code: Cysteine desulfurase (396 aa).

Residues 71–72 (GT), Asn-148, Gln-176, and 196–198 (SGH) each bind pyridoxal 5'-phosphate. Lys-199 carries the N6-(pyridoxal phosphate)lysine modification. Position 231 (Thr-231) interacts with pyridoxal 5'-phosphate. The active-site Cysteine persulfide intermediate is the Cys-319. Cys-319 contributes to the [2Fe-2S] cluster binding site.

Belongs to the class-V pyridoxal-phosphate-dependent aminotransferase family. NifS/IscS subfamily. In terms of assembly, homodimer. The cofactor is pyridoxal 5'-phosphate.

The enzyme catalyses (sulfur carrier)-H + L-cysteine = (sulfur carrier)-SH + L-alanine. Its function is as follows. Catalyzes the removal of elemental sulfur atoms from cysteine to produce alanine. Seems to participate in the biosynthesis of the nitrogenase metalloclusters by providing the inorganic sulfur required for the Fe-S core formation. The sequence is that of Cysteine desulfurase from Azotobacter chroococcum mcd 1.